A 287-amino-acid polypeptide reads, in one-letter code: Large ribosomal subunit protein uL2 (287 aa).

Residues 221–287 form a disordered region; it reads RGSVMNPCDH…SKRSRGGRDS (67 aa). Residues 258-287 show a composition bias toward basic residues; the sequence is KTRKRNKPSNKFVLRKRRKTSKRSRGGRDS.

The protein belongs to the universal ribosomal protein uL2 family. As to quaternary structure, part of the 50S ribosomal subunit. Forms a bridge to the 30S subunit in the 70S ribosome.

One of the primary rRNA binding proteins. Required for association of the 30S and 50S subunits to form the 70S ribosome, for tRNA binding and peptide bond formation. It has been suggested to have peptidyltransferase activity; this is somewhat controversial. Makes several contacts with the 16S rRNA in the 70S ribosome. The sequence is that of Large ribosomal subunit protein uL2 from Synechococcus sp. (strain RCC307).